A 3072-amino-acid polypeptide reads, in one-letter code: Platelet binding protein GspB (3072 aa).

A signal peptide spans 1-85 (MFFKRQKGQY…AVLGGAVVTS (85 aa)). 10 disordered regions span residues 117-147 (EAAT…SASS), 182-254 (SESL…APNV), 876-909 (SAST…SVSA), 936-969 (SAST…SVSA), 1024-2085 (SASV…SVSA), 2106-2139 (SAST…SVSA), 2173-2223 (VSAS…SVSA), 2250-2595 (SAST…SVSA), 2625-2965 (TSAS…NASV), and 3014-3045 (SQSL…GESE). Residues 118-127 (AATTLSSTEA) show a composition bias toward polar residues. The tract at residues 123–236 (SSTEANPVES…SSQQSTEASS (114 aa)) is ser-rich region 1 (SSR1). Composition is skewed to low complexity over residues 131 to 147 (ESLS…SASS) and 182 to 238 (SESL…SSQT). Residues 237-603 (QTGRRRTRRA…GSKFIDTRAG (367 aa)) form a basic region (BR) region. Residues 604–3028 (SISKSQSTSN…ESQSSSASQS (2425 aa)) are ser-rich region 2 (SSR2). Low complexity predominate over residues 3014–3028 (SQSLSESQSSSASQS). Residues 3038-3042 (LPRTG) carry the LPXTG sorting signal motif. The residue at position 3041 (Thr3041) is a Pentaglycyl murein peptidoglycan amidated threonine. A propeptide spans 3042–3072 (GESENKASILALGLGALGLAFKKRKKNESED) (removed by sortase).

Belongs to the serine-rich repeat protein (SRRP) family. As to quaternary structure, both SSR domains in the unglycosylated protein bind to Asp2 and Asp3; glycosylated protein binds less well. Interacts with the human cell surface glycoprotein GP1BA. In terms of processing, proteolytically cleaved by a metalloprotease. Both SSR1 and SSR2 domains are glycosylated. A truncated derivative (residues 1-2062) contains 105 nmol per nmol of protein, suggesting at least 10% of the apparent molecular weight is due to carbohydrates. Glucose and N-acetylglucosamine are present in a ratio of 30:73 residues per truncated polypeptide, as well as minor amounts of galactose and N-acetylgalactosamine. Glycosylation occurs intracellularly in the Ser-rich regions SSR1 and SSR2. Glycosylation of SSR2 domain may be required to prevent aggregation of GspB. It is probable that most of the Ser residues in SSR1 and SSR2 are O-GlcNAcylated. Sequential glycosylation by sugar transferases are able to generate complex sugar polymorphisms.

Its subcellular location is the secreted. It localises to the cell wall. Its function is as follows. Plays a role in virulence and host-pathogen interactions. Mediates binding to human platelets via interaction with the human cell surface glycoprotein GP1BA. Plays a positive role in biofilm formation, possibly by self-association via the basic region (BR). The polypeptide is Platelet binding protein GspB (gspB) (Streptococcus gordonii).